The sequence spans 86 residues: Latartoxin-1b (86 aa).

Residues 1–19 (MKILVLAVVCTVLLQVALS) form the signal peptide. Residues 20–26 (ADSEEVR) constitute a propeptide, removed in mature form. Positions 23–26 (EEVR) match the Processing quadruplet motif motif. 4 disulfides stabilise this stretch: Cys-28-Cys-43, Cys-35-Cys-48, Cys-42-Cys-65, and Cys-50-Cys-63.

It belongs to the neurotoxin 19 (CSTX) family. In terms of processing, contains 4 disulfide bonds. Cleavage of the propeptide depends on the processing quadruplet motif (XXXR, with at least one of X being E). Expressed by the venom gland.

The protein localises to the secreted. Insect toxin. The protein is Latartoxin-1b of Lachesana tarabaevi (Spider).